Here is a 295-residue protein sequence, read N- to C-terminus: Ventral anterior homeobox 1a (295 aa).

Positions 20–33 (ISKPKDNKEIRETQ) are enriched in basic and acidic residues. The tract at residues 20-63 (ISKPKDNKEIRETQAKMPSTYLKEQPGTYPAPGSSELCAKNKSS) is disordered. Residues 97 to 156 (PKRSRTSFTAEQLYRLEMEFQRCQYVVGRERTDLSRQLNLSETQVKVWFQNRRTKQKKDQ) constitute a DNA-binding region (homeobox). The disordered stretch occupies residues 203-226 (RAPNSSGPGTRSLATVTSTPPHQP). Positions 204–222 (APNSSGPGTRSLATVTSTP) are enriched in polar residues.

The protein belongs to the EMX homeobox family.

It is found in the nucleus. Its function is as follows. May play a role in the specification and maintenance of basal forebrain identity. The sequence is that of Ventral anterior homeobox 1a (vax1-a) from Xenopus laevis (African clawed frog).